The primary structure comprises 419 residues: MSYYGSSYRIVNVDSKYPGYPPEHAIAEKRRARRRLLHKDGSCNVYFKHIFGEWGSYMVDIFTTLVDTKWRHMFVIFSLSYILSWLIFGSIFWLIAFHHGDLLSDPDITPCVDNVHSFTAAFLFSLETQTTIGYGYRCVTEECSVAVLTVILQSILSCIINTFIIGAALAKMATARKRAQTIRFSYFALIGMRDGKLCLMWRIGDFRPNHVVEGTVRAQLLRYSEDSEGRMTMAFKDLKLVNDQIILVTPVTIVHEIDHESPLYALDRKAVAKDNFEILVTFIYTGDSTGTSHQSRSSYIPREILWGHRFHDVLEVKRKYYKVNCLQFEGSVEVYAPFCSAKQLDWKDQQLNNLEKTSPARGSCNSDTNTRRRSFSAVAVVSSCENPEETVLSPQDECKEMPYQKALLTLNRISMESQM.

Over 1–67 (MSYYGSSYRI…MVDIFTTLVD (67 aa)) the chain is Cytoplasmic. A helical membrane pass occupies residues 68–94 (TKWRHMFVIFSLSYILSWLIFGSIFWL). Residues 95 to 117 (IAFHHGDLLSDPDITPCVDNVHS) are Extracellular-facing. The helical; Pore-forming intramembrane region spans 118 to 134 (FTAAFLFSLETQTTIGY). The Selectivity filter signature appears at 131 to 136 (TIGYGY). The Extracellular portion of the chain corresponds to 135 to 143 (GYRCVTEEC). Residues 144–171 (SVAVLTVILQSILSCIINTFIIGAALAK) form a helical membrane-spanning segment. Topologically, residues 172-419 (MATARKRAQT…LNRISMESQM (248 aa)) are cytoplasmic. Residues serine 358, serine 374, and serine 376 each carry the phosphoserine modification.

This sequence belongs to the inward rectifier-type potassium channel (TC 1.A.2.1) family. KCNJ16 subfamily. In terms of assembly, it forms heteromeric channels with Kir4.1/KCNJ10; this interaction is required for KCNJ16 localization to the basolateral membrane in kidney cells. As a heteromer with KCNJ10, may interact with MAGI1; this interaction may facilitate KCNJ10/KCNJ16 potassium channel expression at the basolateral membrane in kidney cells. May form heteromers with Kir2.1/KCNJ2. Can form heteromeric channels with Kir4.2/KCNJ15. In terms of tissue distribution, abundantly expressed in the proximal and distal segments of the nephron.

The protein resides in the membrane. It is found in the basolateral cell membrane. The catalysed reaction is K(+)(in) = K(+)(out). Channel activity is strongly regulated by variations of cytosolic pH; channels are activated by alkaline and inhibited by acidic pH values. Activated by phosphatidylinositol 4,5 biphosphate (PtdIns(4,5)P2). Its function is as follows. Inward rectifier potassium channels are characterized by a greater tendency to allow potassium to flow into the cell rather than out of it. Their voltage dependence is regulated by the concentration of extracellular potassium; as external potassium is raised, the voltage range of the channel opening shifts to more positive voltages. The inward rectification is mainly due to the blockage of outward current by internal magnesium. KCNJ16 may be involved in the regulation of fluid and pH balance. In the kidney, together with KCNJ10, mediates basolateral K(+) recycling in distal tubules; this process is critical for Na(+) reabsorption at the tubules. The sequence is that of Inward rectifier potassium channel 16 (Kcnj16) from Mus musculus (Mouse).